The chain runs to 457 residues: Neuropeptide receptor npr-1 (457 aa).

Topologically, residues 1–22 are extracellular; sequence MEVENFTDCQVYWKVYPDPSQS. Residues 23–43 form a helical membrane-spanning segment; sequence IYAIVPFLTVYLFLFFLGLFG. The Cytoplasmic portion of the chain corresponds to 44–62; it reads NVTLIYVTCSHKALLSVQN. Residues 63–83 form a helical membrane-spanning segment; that stretch reads IFILNLAASDCMMCILSLPIT. Over 84-100 the chain is Extracellular; it reads PITNVYKNWYFGNLLCH. Cys99 and Cys178 are disulfide-bonded. Residues 101 to 121 form a helical membrane-spanning segment; it reads LIPCIQGISIFVCTFSLGAIA. The Cytoplasmic segment spans residues 122-140; sequence LDRYILVVRPHSTPLSQRG. The chain crosses the membrane as a helical span at residues 141-161; sequence AFLTTVLLWILSFVVTLPYAF. The Extracellular portion of the chain corresponds to 162–193; the sequence is NMQMIEYTEERICGYFCTEKWESAKSRRAYTM. Residues 194-214 traverse the membrane as a helical segment; it reads IVMLAQFVVPFAVMAFCYANI. Residues 215–279 are Cytoplasmic-facing; it reads VSVLSKRAQT…LQNRRTTSIL (65 aa). A helical transmembrane segment spans residues 280-300; it reads VTMVVWFGITWLPHNVISLII. The Extracellular portion of the chain corresponds to 301–324; the sequence is EYDDTQSFFRLYGRDDYDISYLLN. The helical transmembrane segment at 325-345 threads the bilayer; sequence LFTHSIAMSNNVLNPVLYAWL. Residues 346–457 are Cytoplasmic-facing; the sequence is NPSFRQLVIK…IEFSVNDTLV (112 aa).

The protein belongs to the G-protein coupled receptor 1 family. As to expression, expressed in neurons, including neurons in the head, the ventral nerve cord, and the preanal ganglion.

The protein localises to the membrane. In terms of biological role, G-protein coupled receptor for FARP(FMRFamide related peptide) neuropeptides. Activated by FARP neuropeptides flp-18 and flp-21. Plays a role in modulating social and feeding behavior. Required to modulate locomotion quiescence during the sleep-like state called lethargus, which occurs during molting between larval and adult stages, in part by regulating touch sensitivity. The protein is Neuropeptide receptor npr-1 of Caenorhabditis elegans.